The following is a 62-amino-acid chain: Metallothionein-like protein 3A (62 aa).

This sequence belongs to the metallothionein superfamily. Type 15 family.

Functionally, metallothioneins have a high content of cysteine residues that bind various heavy metals. This is Metallothionein-like protein 3A (MT3A) from Oryza sativa subsp. indica (Rice).